The primary structure comprises 310 residues: MGRMRGEALAQEVLRLKRERNAVILAHSYQLPEVQEVADFVGDSLGLAREAQRTRAEVIVFCGVHFMAETAAILNPEKTVLLPDLEAGCSLADSIRPEDVLAWKAKHPDGIVVAYVNTKAEVKALADVCVTSANAVEVVSRLPQDRPIYFVPDMFLGAHVARVTGRRLDLFPGECHVHAGIREEHLKALLEAHPGAEFLIHPECGCGSGCLYLKPDAKMLSTEGMVRYAKGAEAREFVVATEVGILHRLKKEAPEKAFFPVKPDAVCEYMKRITLEKVYLSLKEMRHVVRVPEEVAGRARRALEAMVAVG.

Positions 27 and 44 each coordinate iminosuccinate. C89 serves as a coordination point for [4Fe-4S] cluster. Residues 115–117 (YVN) and S132 contribute to the iminosuccinate site. C175 is a [4Fe-4S] cluster binding site. Iminosuccinate contacts are provided by residues 201-203 (HPE) and T222. C267 provides a ligand contact to [4Fe-4S] cluster.

The protein belongs to the quinolinate synthase family. Type 2 subfamily. It depends on [4Fe-4S] cluster as a cofactor.

It localises to the cytoplasm. It catalyses the reaction iminosuccinate + dihydroxyacetone phosphate = quinolinate + phosphate + 2 H2O + H(+). The protein operates within cofactor biosynthesis; NAD(+) biosynthesis; quinolinate from iminoaspartate: step 1/1. Functionally, catalyzes the condensation of iminoaspartate with dihydroxyacetone phosphate to form quinolinate. The protein is Quinolinate synthase of Thermus thermophilus (strain ATCC 27634 / DSM 579 / HB8).